A 379-amino-acid chain; its full sequence is MAYKVLVVDDSSFFRRRVTDILNKDPKLNVIDVAVNGQEAVDKALLLKPDVITMDIEMPILNGIEAVRKIMAQSPTSILMFSSLTHQGAKATLEALDAGALDFLPKKFSEIAKNSDEAGSLLRQRVVEIARKSEFSKQRTRTRPAAVNISPKSSRLIADQHRPLASTSSLVTKDKKVMAAITRSSGKEYKLLAIGTSTGGPVALQKILVQLEENFPLPIIIVQHMPAAFTAAFASRLNSLCKISIKEAADGDVLKPGCAYLAPGGRQMLISGSENSAKIKILDDDSPKITFKPSVDISFGSAAKTFAGKVLGVILTGMGSDGKEGARMLKAKGATIWSQDEQSCVVYGMPQAIDKAGISELSLSLDSMAASMVKEISRG.

Residues 4–121 (KVLVVDDSSF…AKNSDEAGSL (118 aa)) form the Response regulatory domain. Aspartate 55 carries the 4-aspartylphosphate modification. A CheB-type methylesterase domain is found at 185-379 (SGKEYKLLAI…ASMVKEISRG (195 aa)). Catalysis depends on residues serine 197, histidine 224, and aspartate 321.

It belongs to the CheB family. In terms of processing, phosphorylated by CheA. Phosphorylation of the N-terminal regulatory domain activates the methylesterase activity.

The protein localises to the cytoplasm. The enzyme catalyses [protein]-L-glutamate 5-O-methyl ester + H2O = L-glutamyl-[protein] + methanol + H(+). It catalyses the reaction L-glutaminyl-[protein] + H2O = L-glutamyl-[protein] + NH4(+). In terms of biological role, involved in chemotaxis. Part of a chemotaxis signal transduction system that modulates chemotaxis in response to various stimuli. Catalyzes the demethylation of specific methylglutamate residues introduced into the chemoreceptors (methyl-accepting chemotaxis proteins or MCP) by CheR. Also mediates the irreversible deamidation of specific glutamine residues to glutamic acid. The protein is Protein-glutamate methylesterase/protein-glutamine glutaminase of Colwellia psychrerythraea (strain 34H / ATCC BAA-681) (Vibrio psychroerythus).